The sequence spans 251 residues: HTH-type transcriptional regulator UlaR (251 aa).

An HTH deoR-type domain is found at 3-58 (EAQRHQILLEMLAQLGFVTVEKVVERLGISPATARRDINKLDESGKLKKVRNGAEA). A DNA-binding region (H-T-H motif) is located at residues 20–39 (VTVEKVVERLGISPATARRD).

The protein localises to the cytoplasm. In terms of biological role, represses ulaG and the ulaABCDEF operon. In Escherichia coli O127:H6 (strain E2348/69 / EPEC), this protein is HTH-type transcriptional regulator UlaR.